A 732-amino-acid polypeptide reads, in one-letter code: 1,4-alpha-glucan branching enzyme GlgB 1 (732 aa).

Asp-411 acts as the Nucleophile in catalysis. Glu-464 serves as the catalytic Proton donor.

It belongs to the glycosyl hydrolase 13 family. GlgB subfamily. Monomer.

It catalyses the reaction Transfers a segment of a (1-&gt;4)-alpha-D-glucan chain to a primary hydroxy group in a similar glucan chain.. It functions in the pathway glycan biosynthesis; glycogen biosynthesis. Its function is as follows. Catalyzes the formation of the alpha-1,6-glucosidic linkages in glycogen by scission of a 1,4-alpha-linked oligosaccharide from growing alpha-1,4-glucan chains and the subsequent attachment of the oligosaccharide to the alpha-1,6 position. The protein is 1,4-alpha-glucan branching enzyme GlgB 1 of Xanthomonas euvesicatoria pv. vesicatoria (strain 85-10) (Xanthomonas campestris pv. vesicatoria).